The following is a 270-amino-acid chain: Diaminopimelate epimerase (270 aa).

Substrate-binding residues include N15, Q49, and N66. The Proton donor role is filled by C75. Residues 76 to 77, N155, N187, and 204 to 205 each bind substrate; these read GN and ER. Residue C213 is the Proton acceptor of the active site. Position 214–215 (214–215) interacts with substrate; it reads GS.

This sequence belongs to the diaminopimelate epimerase family. As to quaternary structure, homodimer.

The protein resides in the cytoplasm. It catalyses the reaction (2S,6S)-2,6-diaminopimelate = meso-2,6-diaminopimelate. Its pathway is amino-acid biosynthesis; L-lysine biosynthesis via DAP pathway; DL-2,6-diaminopimelate from LL-2,6-diaminopimelate: step 1/1. Its function is as follows. Catalyzes the stereoinversion of LL-2,6-diaminopimelate (L,L-DAP) to meso-diaminopimelate (meso-DAP), a precursor of L-lysine and an essential component of the bacterial peptidoglycan. This chain is Diaminopimelate epimerase, found in Rickettsia africae (strain ESF-5).